The primary structure comprises 459 residues: MNILRGDNLNRDTIVALSTPPGIGAIAIIRISGNKSLELTEKTIKNKKINIKTLEERRINHGYFYDENGEIIDEIMFVYFKSPRSYTGEDMVEIYCHGGILVTNKIIDTLLKLGARLAENGEFTRRAFLNGKIDLIKAESILQIIEAKSEKSLKLALDNLKGKLSNEIEYLRSSLINVLSKIEVSIDYGDDIDVPKEEILNDLINVQSFLKEKIKHADKGLHISTGVTMAIVGKPNVGKSTLLNRLLVEDRAIVTDIPGTTRDVIKGELKIKGVHFIISDTAGIRMTEDKVEKIGIEKALNEAKKSDVILFLLDATTGFTNEDEYIYNLIKDCNFIPVWNKIDIAEKVDKDIVFLRNSVVISAETGRGMRELEEKILESVKVLVEDGELSHVTSKRQLEYLKRVEYNIIKAINSLKKNMPLDIISIDIRNGLEQLDELMGRNFTEDLLDNIFSNFCVGK.

Positions 30, 93, and 132 each coordinate (6S)-5-formyl-5,6,7,8-tetrahydrofolate. The TrmE-type G domain maps to 226 to 381 (GVTMAIVGKP…LEEKILESVK (156 aa)). Residue Asn-236 participates in K(+) binding. GTP-binding positions include 236–241 (NVGKST), 255–261 (TDIPGTT), and 280–283 (DTAG). A Mg(2+)-binding site is contributed by Ser-240. Residues Thr-255, Ile-257, and Thr-260 each contribute to the K(+) site. Mg(2+) is bound at residue Thr-261. Lys-459 serves as a coordination point for (6S)-5-formyl-5,6,7,8-tetrahydrofolate.

It belongs to the TRAFAC class TrmE-Era-EngA-EngB-Septin-like GTPase superfamily. TrmE GTPase family. Homodimer. Heterotetramer of two MnmE and two MnmG subunits. It depends on K(+) as a cofactor.

The protein resides in the cytoplasm. In terms of biological role, exhibits a very high intrinsic GTPase hydrolysis rate. Involved in the addition of a carboxymethylaminomethyl (cmnm) group at the wobble position (U34) of certain tRNAs, forming tRNA-cmnm(5)s(2)U34. This Fervidobacterium nodosum (strain ATCC 35602 / DSM 5306 / Rt17-B1) protein is tRNA modification GTPase MnmE.